A 304-amino-acid polypeptide reads, in one-letter code: N-acetylmuramic acid 6-phosphate etherase (304 aa).

Positions 62–225 constitute an SIS domain; the sequence is IVQAFQNGGR…TTASMVMIGK (164 aa). E90 acts as the Proton donor in catalysis. E121 is a catalytic residue.

Belongs to the GCKR-like family. MurNAc-6-P etherase subfamily. Homodimer.

The catalysed reaction is N-acetyl-D-muramate 6-phosphate + H2O = N-acetyl-D-glucosamine 6-phosphate + (R)-lactate. It functions in the pathway amino-sugar metabolism; 1,6-anhydro-N-acetylmuramate degradation. It participates in amino-sugar metabolism; N-acetylmuramate degradation. Its pathway is cell wall biogenesis; peptidoglycan recycling. Functionally, specifically catalyzes the cleavage of the D-lactyl ether substituent of MurNAc 6-phosphate, producing GlcNAc 6-phosphate and D-lactate. Together with AnmK, is also required for the utilization of anhydro-N-acetylmuramic acid (anhMurNAc) either imported from the medium or derived from its own cell wall murein, and thus plays a role in cell wall recycling. The sequence is that of N-acetylmuramic acid 6-phosphate etherase from Actinobacillus pleuropneumoniae serotype 7 (strain AP76).